A 457-amino-acid polypeptide reads, in one-letter code: Argininosuccinate lyase (457 aa).

Belongs to the lyase 1 family. Argininosuccinate lyase subfamily.

It localises to the cytoplasm. It catalyses the reaction 2-(N(omega)-L-arginino)succinate = fumarate + L-arginine. It participates in amino-acid biosynthesis; L-arginine biosynthesis; L-arginine from L-ornithine and carbamoyl phosphate: step 3/3. The chain is Argininosuccinate lyase from Escherichia coli O1:K1 / APEC.